The chain runs to 1037 residues: Signal-induced proliferation-associated protein 1 (1037 aa).

Positions 1–85 are disordered; sequence MWAGGVGSPR…ASRPAATPTR (85 aa). T62 is subject to Phosphothreonine. Residues S65, S178, S299, and S309 each carry the phosphoserine modification. Positions 316–534 constitute a Rap-GAP domain; sequence LLTLDEQVLS…RTRQQYLQDL (219 aa). Residues 682–758 form the PDZ domain; that stretch reads ELALPRDGQG…VCVTVLPPDE (77 aa). S812 and S834 each carry phosphoserine. Disordered stretches follow at residues 830-849 and 855-898; these read HNSL…LPNT and LVTT…ASIL. Low complexity predominate over residues 871-881; sequence PPSQDQSGSPS. Position 907 is a phosphoserine (S907). A disordered region spans residues 943–969; the sequence is REGQPISESGDPKEALKCDSEPEPGSL. Residues 952–962 show a composition bias toward basic and acidic residues; that stretch reads GDPKEALKCDS. Residues 968 to 1025 adopt a coiled-coil conformation; that stretch reads SLSEKVSHLESMLWKLQEDLQREKADRAALEEEVRSLRHNNQRLLAESESAATRLLLA.

As to quaternary structure, interacts with RRP1B; the interaction leads to inhibition of SIPA1 GTPase activity. As to expression, preferentially expressed in both fetal and adult lymphohematopoietic tissues.

The protein resides in the nucleus. It is found in the cytoplasm. Its subcellular location is the perinuclear region. The protein localises to the endomembrane system. GTPase activator for the nuclear Ras-related regulatory proteins Rap1, Rsr1 and Ran in vitro, converting them to the putatively inactive GDP-bound state. Affects cell cycle progression. The chain is Signal-induced proliferation-associated protein 1 (Sipa1) from Mus musculus (Mouse).